Consider the following 742-residue polypeptide: Synaptic vesicle glycoprotein 2A (742 aa).

Residues 1–57 (MEEGFRDRAAFIRGAKDIAKEVKKHAAKKVVKGLDRVQDEYSRRSYSRFEEEDDDDD) are interaction with SYT1. Topologically, residues 1–169 (MEEGFRDRAA…GHGRFQWTLY (169 aa)) are cytoplasmic. The segment covering 40–49 (EYSRRSYSRF) has biased composition (basic and acidic residues). Residues 40–145 (EYSRRSYSRF…RGEAQRRKDR (106 aa)) form a disordered region. A phosphoserine mark is found at Ser80 and Ser81. Thr84 carries the post-translational modification Phosphothreonine. The segment covering 122–137 (VRGGLSDGEGPPGGRG) has biased composition (gly residues). Ser127 bears the Phosphoserine mark. A helical membrane pass occupies residues 170–190 (FVLGLALMADGVEVFVVGFVL). The Extracellular segment spans residues 191 to 205 (PSAEKDMCLSDSNKG). A helical transmembrane segment spans residues 206–226 (MLGLIVYLGMMVGAFLWGGLA). The Cytoplasmic segment spans residues 227-233 (DRLGRRQ). Residues 234–254 (CLLISLSVNSVFAFFSSFVQG) traverse the membrane as a helical segment. Residues 255–262 (YGTFLFCR) lie on the Extracellular side of the membrane. A helical membrane pass occupies residues 263-283 (LLSGVGIGGSIPIVFSYFSEF). Residues 284–294 (LAQEKRGEHLS) lie on the Cytoplasmic side of the membrane. Residues 295 to 315 (WLCMFWMIGGVYAAAMAWAII) form a helical membrane-spanning segment. Over 316 to 334 (PHYGWSFQMGSAYQFHSWR) the chain is Extracellular. A helical membrane pass occupies residues 335 to 355 (VFVLVCAFPSVFAIGALTTQP). The Cytoplasmic segment spans residues 356–447 (ESPRFFLENG…CFSPEYRRIT (92 aa)). Ser393 is modified (phosphoserine). A helical transmembrane segment spans residues 448 to 468 (LMMMGVWFTMSFSYYGLTVWF). The Extracellular portion of the chain corresponds to 469–598 (PDMIRHLQAV…GTGEGAYMVY (130 aa)). At Tyr480 the chain carries Phosphotyrosine. 3 N-linked (GlcNAc...) asparagine glycosylation sites follow: Asn498, Asn548, and Asn573. A helical membrane pass occupies residues 599–619 (FVSFLGTLAVLPGNIVSALLM). Residues 620 to 626 (DKIGRLR) lie on the Cytoplasmic side of the membrane. The helical transmembrane segment at 627–647 (MLAGSSVLSCVSCFFLSFGNS) threads the bilayer. Residues 648–651 (ESAM) lie on the Extracellular side of the membrane. The chain crosses the membrane as a helical span at residues 652-672 (IALLCLFGGVSIASWNALDVL). The Cytoplasmic segment spans residues 673–685 (TVELYPSDKRTTA). A helical membrane pass occupies residues 686–708 (FGFLNALCKLAAVLGISIFTSFV). Topologically, residues 709–712 (GITK) are extracellular. Residues 713–731 (AAPILFASAALALGSSLAL) form a helical membrane-spanning segment. Topologically, residues 732–742 (KLPETRGQVLQ) are cytoplasmic.

It belongs to the major facilitator superfamily. Interacts with SYT1/synaptotagmin-1 in a calcium-dependent manner. Binds the adapter protein complex AP-2. As to quaternary structure, (Microbial infection) Interacts with C.botulinum neurotoxin type A (BoNT/A, botA). In terms of processing, phosphorylation by CK1 of the N-terminal cytoplasmic domain regulates interaction with SYT1. N-glycosylated. As to expression, expressed in conventional synapses and cone ribbon synapses in the retina (at protein level). Expressed in diaphragm motor nerve terminals (at protein level). Expressed in hippocampus neurons (at protein level).

It localises to the presynapse. It is found in the cytoplasmic vesicle. The protein resides in the secretory vesicle. Its subcellular location is the synaptic vesicle membrane. Functionally, plays a role in the control of regulated secretion in neural and endocrine cells, enhancing selectively low-frequency neurotransmission. Positively regulates vesicle fusion by maintaining the readily releasable pool of secretory vesicles. Its function is as follows. (Microbial infection) Receptor for C.botulinum neurotoxin type A (BoNT/A, botA); the toxin probably binds via extracellular loop 4. (Microbial infection) Possible receptor for C.botulinum neurotoxin type D (BoNT/D, botD); BoNT/D does not bind to extracellular loop 4 as do BoNT/A and BoNT/E. In terms of biological role, (Microbial infection) Receptor for C.botulinum neurotoxin type E (BoNT/E); the toxin probably binds via extracellular loop 4. It probably requires glycosylation of Asn-573. The polypeptide is Synaptic vesicle glycoprotein 2A (Sv2a) (Mus musculus (Mouse)).